The primary structure comprises 561 residues: MACPF domain-containing protein CAD1 (561 aa).

An MACPF domain is found at Val-11–Leu-314. The tract at residues Val-489–Gly-514 is disordered. Over residues Pro-500–Ser-513 the composition is skewed to polar residues.

The protein belongs to the complement C6/C7/C8/C9 (TC 1.C.39) family. Mainly expressed in the vascular system.

In terms of biological role, negatively controls the salicylic acid (SA)-mediated pathway of programmed cell death in plant immunity. This chain is MACPF domain-containing protein CAD1 (CAD1), found in Arabidopsis thaliana (Mouse-ear cress).